Reading from the N-terminus, the 482-residue chain is Glutamate--tRNA ligase 2 (482 aa).

The 'HIGH' region motif lies at 8–18; the sequence is PSPTGQLHIGG. A 'KMSKS' region motif is present at residues 249–253; it reads KLSKR. Lys252 serves as a coordination point for ATP.

Belongs to the class-I aminoacyl-tRNA synthetase family. Glutamate--tRNA ligase type 1 subfamily. As to quaternary structure, monomer.

It localises to the cytoplasm. The catalysed reaction is tRNA(Glu) + L-glutamate + ATP = L-glutamyl-tRNA(Glu) + AMP + diphosphate. Its function is as follows. Catalyzes the attachment of glutamate to tRNA(Glu) in a two-step reaction: glutamate is first activated by ATP to form Glu-AMP and then transferred to the acceptor end of tRNA(Glu). This chain is Glutamate--tRNA ligase 2, found in Caldicellulosiruptor saccharolyticus (strain ATCC 43494 / DSM 8903 / Tp8T 6331).